Consider the following 331-residue polypeptide: Anthranilate phosphoribosyltransferase (331 aa).

Residues glycine 79, 82 to 83 (GD), threonine 87, 89 to 92 (NVST), 107 to 115 (KHGNYGVSS), and serine 119 contribute to the 5-phospho-alpha-D-ribose 1-diphosphate site. Position 79 (glycine 79) interacts with anthranilate. Serine 91 contacts Mg(2+). Asparagine 110 contributes to the anthranilate binding site. Residue arginine 165 participates in anthranilate binding. 2 residues coordinate Mg(2+): aspartate 223 and glutamate 224.

This sequence belongs to the anthranilate phosphoribosyltransferase family. In terms of assembly, homodimer. It depends on Mg(2+) as a cofactor.

The enzyme catalyses N-(5-phospho-beta-D-ribosyl)anthranilate + diphosphate = 5-phospho-alpha-D-ribose 1-diphosphate + anthranilate. It participates in amino-acid biosynthesis; L-tryptophan biosynthesis; L-tryptophan from chorismate: step 2/5. Its function is as follows. Catalyzes the transfer of the phosphoribosyl group of 5-phosphorylribose-1-pyrophosphate (PRPP) to anthranilate to yield N-(5'-phosphoribosyl)-anthranilate (PRA). This Christiangramia forsetii (strain DSM 17595 / CGMCC 1.15422 / KT0803) (Gramella forsetii) protein is Anthranilate phosphoribosyltransferase.